The sequence spans 210 residues: Urease accessory protein UreE (210 aa).

The interval 136–210 is disordered; the sequence is PEGGAYAEPS…HGHSHAHDHK (75 aa). Composition is skewed to basic and acidic residues over residues 145–169 and 178–196; these read SHAHGDHDHDHHGHDHHGHDHTSHD and HDHDHGHAHDDHVHDEHCG. Residues 197–210 show a composition bias toward basic residues; it reads HDHHHGHSHAHDHK.

The protein belongs to the UreE family.

Its subcellular location is the cytoplasm. Involved in urease metallocenter assembly. Binds nickel. Probably functions as a nickel donor during metallocenter assembly. The chain is Urease accessory protein UreE from Bradyrhizobium sp. (strain ORS 278).